Consider the following 388-residue polypeptide: Flap endonuclease 1 (388 aa).

The tract at residues 1–104 (MGILGLSKLI…GELAKRAERR (104 aa)) is N-domain. Residue Asp-34 coordinates Mg(2+). Residues Arg-47 and Arg-70 each coordinate DNA. Mg(2+) is bound by residues Asp-86, Glu-158, Glu-160, Asp-179, and Asp-181. Residues 122-253 (QIEKFNRRLV…KRAIELIKSY (132 aa)) are I-domain. Residue Glu-158 coordinates DNA. The DNA site is built by Gly-231 and Asp-233. A Mg(2+)-binding site is contributed by Asp-233. An interaction with PCNA region spans residues 336–344 (TQVRLDSFF). The interval 355–388 (AAAKRKAEESKKSANSKKAKIGGGSGAGRGRRPK) is disordered.

Belongs to the XPG/RAD2 endonuclease family. FEN1 subfamily. As to quaternary structure, interacts with PCNA. Three molecules of FEN1 bind to one PCNA trimer with each molecule binding to one PCNA monomer. PCNA stimulates the nuclease activity without altering cleavage specificity. Mg(2+) serves as cofactor. Post-translationally, phosphorylated. Phosphorylation upon DNA damage induces relocalization to the nuclear plasma.

Its subcellular location is the nucleus. The protein localises to the nucleolus. It is found in the nucleoplasm. The protein resides in the mitochondrion. Structure-specific nuclease with 5'-flap endonuclease and 5'-3' exonuclease activities involved in DNA replication and repair. During DNA replication, cleaves the 5'-overhanging flap structure that is generated by displacement synthesis when DNA polymerase encounters the 5'-end of a downstream Okazaki fragment. It enters the flap from the 5'-end and then tracks to cleave the flap base, leaving a nick for ligation. Also involved in the long patch base excision repair (LP-BER) pathway, by cleaving within the apurinic/apyrimidinic (AP) site-terminated flap. Acts as a genome stabilization factor that prevents flaps from equilibrating into structures that lead to duplications and deletions. Also possesses 5'-3' exonuclease activity on nicked or gapped double-stranded DNA, and exhibits RNase H activity. Also involved in replication and repair of rDNA and in repairing mitochondrial DNA. This Drosophila grimshawi (Hawaiian fruit fly) protein is Flap endonuclease 1.